Reading from the N-terminus, the 286-residue chain is Thiazole synthase (286 aa).

Lys-122 acts as the Schiff-base intermediate with DXP in catalysis. Residues Gly-183, 209 to 210 (AG), and 231 to 232 (NT) contribute to the 1-deoxy-D-xylulose 5-phosphate site.

This sequence belongs to the ThiG family. Homotetramer. Forms heterodimers with either ThiH or ThiS.

The protein localises to the cytoplasm. The enzyme catalyses [ThiS sulfur-carrier protein]-C-terminal-Gly-aminoethanethioate + 2-iminoacetate + 1-deoxy-D-xylulose 5-phosphate = [ThiS sulfur-carrier protein]-C-terminal Gly-Gly + 2-[(2R,5Z)-2-carboxy-4-methylthiazol-5(2H)-ylidene]ethyl phosphate + 2 H2O + H(+). It participates in cofactor biosynthesis; thiamine diphosphate biosynthesis. Functionally, catalyzes the rearrangement of 1-deoxy-D-xylulose 5-phosphate (DXP) to produce the thiazole phosphate moiety of thiamine. Sulfur is provided by the thiocarboxylate moiety of the carrier protein ThiS. In vitro, sulfur can be provided by H(2)S. The chain is Thiazole synthase from Synechococcus elongatus (strain ATCC 33912 / PCC 7942 / FACHB-805) (Anacystis nidulans R2).